Here is a 148-residue protein sequence, read N- to C-terminus: UPF0178 protein EF_0842 (148 aa).

The protein belongs to the UPF0178 family.

This Enterococcus faecalis (strain ATCC 700802 / V583) protein is UPF0178 protein EF_0842.